A 279-amino-acid chain; its full sequence is 3-methyl-2-oxobutanoate hydroxymethyltransferase (279 aa).

Aspartate 43 and aspartate 82 together coordinate Mg(2+). 3-methyl-2-oxobutanoate-binding positions include 43–44 (DS), aspartate 82, and lysine 112. Residue glutamate 114 participates in Mg(2+) binding. Glutamate 181 (proton acceptor) is an active-site residue.

This sequence belongs to the PanB family. Homodecamer; pentamer of dimers. Mg(2+) serves as cofactor.

The protein resides in the cytoplasm. It carries out the reaction 3-methyl-2-oxobutanoate + (6R)-5,10-methylene-5,6,7,8-tetrahydrofolate + H2O = 2-dehydropantoate + (6S)-5,6,7,8-tetrahydrofolate. The protein operates within cofactor biosynthesis; (R)-pantothenate biosynthesis; (R)-pantoate from 3-methyl-2-oxobutanoate: step 1/2. Its function is as follows. Catalyzes the reversible reaction in which hydroxymethyl group from 5,10-methylenetetrahydrofolate is transferred onto alpha-ketoisovalerate to form ketopantoate. This Geobacillus kaustophilus (strain HTA426) protein is 3-methyl-2-oxobutanoate hydroxymethyltransferase.